The primary structure comprises 135 residues: Ribosome-binding factor A (135 aa).

This sequence belongs to the RbfA family. Monomer. Binds 30S ribosomal subunits, but not 50S ribosomal subunits or 70S ribosomes.

Its subcellular location is the cytoplasm. In terms of biological role, one of several proteins that assist in the late maturation steps of the functional core of the 30S ribosomal subunit. Associates with free 30S ribosomal subunits (but not with 30S subunits that are part of 70S ribosomes or polysomes). Required for efficient processing of 16S rRNA. May interact with the 5'-terminal helix region of 16S rRNA. The chain is Ribosome-binding factor A from Bartonella quintana (strain Toulouse) (Rochalimaea quintana).